Here is a 178-residue protein sequence, read N- to C-terminus: Alkyl hydroperoxide reductase AhpD (178 aa).

The active-site Proton donor is the Cys131. A disulfide bridge links Cys131 with Cys134. Cys134 acts as the Cysteine sulfenic acid (-SOH) intermediate in catalysis.

Belongs to the AhpD family.

The enzyme catalyses N(6)-[(R)-dihydrolipoyl]-L-lysyl-[lipoyl-carrier protein] + a hydroperoxide = N(6)-[(R)-lipoyl]-L-lysyl-[lipoyl-carrier protein] + an alcohol + H2O. In terms of biological role, antioxidant protein with alkyl hydroperoxidase activity. Required for the reduction of the AhpC active site cysteine residues and for the regeneration of the AhpC enzyme activity. This Methylocella silvestris (strain DSM 15510 / CIP 108128 / LMG 27833 / NCIMB 13906 / BL2) protein is Alkyl hydroperoxide reductase AhpD.